Here is a 174-residue protein sequence, read N- to C-terminus: Trypsin inhibitor BvTI (174 aa).

Disulfide bonds link cysteine 41/cysteine 84 and cysteine 131/cysteine 138.

This sequence belongs to the protease inhibitor I3 (leguminous Kunitz-type inhibitor) family.

The protein localises to the secreted. In terms of biological role, inhibits bovine trypsin and chymotrypsin, and human plasmin, plasma kallikrein and factor XIIa. The chain is Trypsin inhibitor BvTI from Bauhinia variegata (Purple orchid tree).